A 901-amino-acid polypeptide reads, in one-letter code: HTH-type transcriptional regulator MalT (901 aa).

39–46 contacts ATP; that stretch reads SPAGYGKT. Positions 829–894 constitute an HTH luxR-type domain; it reads ELIRTSPLTQ…DAVQHAQQLL (66 aa). The H-T-H motif DNA-binding region spans 853–872; the sequence is NEQIAGELAVAATTIKTHIR.

This sequence belongs to the MalT family. In terms of assembly, monomer in solution. Oligomerizes to an active state in the presence of the positive effectors ATP and maltotriose.

With respect to regulation, activated by ATP and maltotriose, which are both required for DNA binding. In terms of biological role, positively regulates the transcription of the maltose regulon whose gene products are responsible for uptake and catabolism of malto-oligosaccharides. Specifically binds to the promoter region of its target genes, recognizing a short DNA motif called the MalT box. The sequence is that of HTH-type transcriptional regulator MalT from Salmonella agona (strain SL483).